Reading from the N-terminus, the 315-residue chain is 4-diphosphocytidyl-2-C-methyl-D-erythritol kinase (315 aa).

Residue Lys11 is part of the active site. 99–109 (PMAAGLAGGSA) is a binding site for ATP. Residue Asp141 is part of the active site.

This sequence belongs to the GHMP kinase family. IspE subfamily.

It carries out the reaction 4-CDP-2-C-methyl-D-erythritol + ATP = 4-CDP-2-C-methyl-D-erythritol 2-phosphate + ADP + H(+). It functions in the pathway isoprenoid biosynthesis; isopentenyl diphosphate biosynthesis via DXP pathway; isopentenyl diphosphate from 1-deoxy-D-xylulose 5-phosphate: step 3/6. Its function is as follows. Catalyzes the phosphorylation of the position 2 hydroxy group of 4-diphosphocytidyl-2C-methyl-D-erythritol. This chain is 4-diphosphocytidyl-2-C-methyl-D-erythritol kinase, found in Synechocystis sp. (strain ATCC 27184 / PCC 6803 / Kazusa).